The chain runs to 163 residues: Small heat shock protein C1 (163 aa).

In terms of domain architecture, sHSP spans 55–163 (MFYESSSIKS…EQDAKEITIN (109 aa)).

Belongs to the small heat shock protein (HSP20) family.

In Rickettsia typhi (strain ATCC VR-144 / Wilmington), this protein is Small heat shock protein C1 (hspC1).